A 505-amino-acid polypeptide reads, in one-letter code: uncharacterized protein (505 aa).

One can recognise a Radical SAM core domain in the interval 193-440; that stretch reads CTNKKCNLCE…LEIKKKYIGR (248 aa). 3 residues coordinate [4Fe-4S] cluster: C208, C216, and C219. Residues 435–499 enclose the TRAM domain; the sequence is KKYIGRVLEV…EKYLEGRILK (65 aa).

Requires [4Fe-4S] cluster as cofactor.

This is an uncharacterized protein from Methanocaldococcus jannaschii (strain ATCC 43067 / DSM 2661 / JAL-1 / JCM 10045 / NBRC 100440) (Methanococcus jannaschii).